Reading from the N-terminus, the 308-residue chain is Reaction center protein M chain (308 aa).

A run of 3 helical transmembrane segments spans residues glycine 54–glycine 80, lysine 111–alanine 140, and methionine 143–leucine 168. (7R,8Z)-bacteriochlorophyll b is bound by residues histidine 183 and histidine 203. The helical transmembrane segment at phenylalanine 198 to alanine 226 threads the bilayer. 2 residues coordinate Fe cation: histidine 220 and glutamate 235. Position 253 (tryptophan 253) interacts with a ubiquinone. The helical transmembrane segment at asparagine 260–leucine 286 threads the bilayer. Histidine 267 is a binding site for Fe cation.

The protein belongs to the reaction center PufL/M/PsbA/D family. In terms of assembly, reaction center is composed of four bacteriochlorophylls, two bacteriopheophytins, two ubiquinones, one iron, and three highly hydrophobic polypeptide chains (designated L, M, and H).

It localises to the cellular chromatophore membrane. Its function is as follows. The reaction center is a membrane-bound complex that mediates the initial photochemical event in the electron transfer process of photosynthesis. In Cereibacter sphaeroides (strain ATCC 17023 / DSM 158 / JCM 6121 / CCUG 31486 / LMG 2827 / NBRC 12203 / NCIMB 8253 / ATH 2.4.1.) (Rhodobacter sphaeroides), this protein is Reaction center protein M chain (pufM).